Consider the following 165-residue polypeptide: Interferon gamma (165 aa).

Positions 1 to 23 (MKYTSYILAFQLCIVLGSLGCYC) are cleaved as a signal peptide. A Pyrrolidone carboxylic acid modification is found at Gln-24. Asn-48 and Asn-120 each carry an N-linked (GlcNAc...) asparagine glycan.

Belongs to the type II (or gamma) interferon family. In terms of assembly, homodimer. Interacts with IFNGR1 (via extracellular domain); this interaction promotes IFNGR1 dimerization. In terms of tissue distribution, released primarily from activated T lymphocytes.

The protein resides in the secreted. Functionally, type II interferon produced by immune cells such as T-cells and NK cells that plays crucial roles in antimicrobial, antiviral, and antitumor responses by activating effector immune cells and enhancing antigen presentation. Primarily signals through the JAK-STAT pathway after interaction with its receptor IFNGR1 to affect gene regulation. Upon IFNG binding, IFNGR1 intracellular domain opens out to allow association of downstream signaling components JAK2, JAK1 and STAT1, leading to STAT1 activation, nuclear translocation and transcription of IFNG-regulated genes. Many of the induced genes are transcription factors such as IRF1 that are able to further drive regulation of a next wave of transcription. Plays a role in class I antigen presentation pathway by inducing a replacement of catalytic proteasome subunits with immunoproteasome subunits. In turn, increases the quantity, quality, and repertoire of peptides for class I MHC loading. Increases the efficiency of peptide generation also by inducing the expression of activator PA28 that associates with the proteasome and alters its proteolytic cleavage preference. Up-regulates as well MHC II complexes on the cell surface by promoting expression of several key molecules such as cathepsins B/CTSB, H/CTSH, and L/CTSL. Participates in the regulation of hematopoietic stem cells during development and under homeostatic conditions by affecting their development, quiescence, and differentiation. The protein is Interferon gamma (IFNG) of Cercocebus atys (Sooty mangabey).